We begin with the raw amino-acid sequence, 197 residues long: Xanthine phosphoribosyltransferase (197 aa).

Positions 20 and 27 each coordinate xanthine. 128-132 (ANGQA) is a binding site for 5-phospho-alpha-D-ribose 1-diphosphate. K156 lines the xanthine pocket.

The protein belongs to the purine/pyrimidine phosphoribosyltransferase family. Xpt subfamily. In terms of assembly, homodimer.

It localises to the cytoplasm. It carries out the reaction XMP + diphosphate = xanthine + 5-phospho-alpha-D-ribose 1-diphosphate. Its pathway is purine metabolism; XMP biosynthesis via salvage pathway; XMP from xanthine: step 1/1. Functionally, converts the preformed base xanthine, a product of nucleic acid breakdown, to xanthosine 5'-monophosphate (XMP), so it can be reused for RNA or DNA synthesis. The protein is Xanthine phosphoribosyltransferase of Bacillus cereus (strain B4264).